The following is a 265-amino-acid chain: Adenosylcobinamide-GDP ribazoletransferase (265 aa).

7 consecutive transmembrane segments (helical) span residues 40–60 (IAYA…VVLV), 67–87 (LPAF…TGAF), 121–141 (GGCA…ALVA), 150–170 (LALV…LLAL), 191–211 (LACA…GFGI), 213–233 (TAFA…RLSG), and 243–263 (VAGA…LIFP).

It belongs to the CobS family. The cofactor is Mg(2+).

It is found in the cell inner membrane. It carries out the reaction alpha-ribazole + adenosylcob(III)inamide-GDP = adenosylcob(III)alamin + GMP + H(+). It catalyses the reaction alpha-ribazole 5'-phosphate + adenosylcob(III)inamide-GDP = adenosylcob(III)alamin 5'-phosphate + GMP + H(+). Its pathway is cofactor biosynthesis; adenosylcobalamin biosynthesis; adenosylcobalamin from cob(II)yrinate a,c-diamide: step 7/7. In terms of biological role, joins adenosylcobinamide-GDP and alpha-ribazole to generate adenosylcobalamin (Ado-cobalamin). Also synthesizes adenosylcobalamin 5'-phosphate from adenosylcobinamide-GDP and alpha-ribazole 5'-phosphate. This chain is Adenosylcobinamide-GDP ribazoletransferase, found in Xanthobacter autotrophicus (strain ATCC BAA-1158 / Py2).